The primary structure comprises 95 residues: Large ribosomal subunit protein uL23 (95 aa).

This sequence belongs to the universal ribosomal protein uL23 family. Part of the 50S ribosomal subunit. Contacts protein L29, and trigger factor when it is bound to the ribosome.

One of the early assembly proteins it binds 23S rRNA. One of the proteins that surrounds the polypeptide exit tunnel on the outside of the ribosome. Forms the main docking site for trigger factor binding to the ribosome. The sequence is that of Large ribosomal subunit protein uL23 from Thermodesulfovibrio yellowstonii (strain ATCC 51303 / DSM 11347 / YP87).